A 405-amino-acid chain; its full sequence is Prostaglandin E2 receptor EP1 subtype (405 aa).

Residues 1–39 (MSPCGLNLSLADEAATCATPRLPNTSVVLPTGDNGTSPA) lie on the Extracellular side of the membrane. Asn-7, Asn-24, and Asn-34 each carry an N-linked (GlcNAc...) asparagine glycan. The chain crosses the membrane as a helical span at residues 40-62 (LPIFSMTLGAVSNVLALALLAQV). At 63–80 (AGRMRRRRSAATFLLFVA) the chain is on the cytoplasmic side. A helical transmembrane segment spans residues 81–99 (SLLAIDLAGHVIPGALVLR). The Extracellular segment spans residues 100-113 (LYTAGRAPAGGACH). Residues Cys-112 and Cys-190 are joined by a disulfide bond. The chain crosses the membrane as a helical span at residues 114–135 (FLGGCMVFFGLCPLLLGCGMAV). The Cytoplasmic segment spans residues 136 to 157 (ERCVGVTQPLIHAARVSVARAR). A helical membrane pass occupies residues 158–179 (LALAVLAAMALAVALLPLVHVG). The Extracellular segment spans residues 180 to 202 (RYELQYPGTWCFISLGPRGGWRQ). A helical membrane pass occupies residues 203-228 (ALLAGLFAGLGLAALLAALVCNTLSG). Residues 229–301 (LALLRARWRR…HAHDVEMVGQ (73 aa)) lie on the Cytoplasmic side of the membrane. Residues 243–287 (RFRKTAGPDDRRRWGSRGPRLASASSASSITSATATLRSSRGGGS) are disordered. Over residues 262–282 (RLASASSASSITSATATLRSS) the composition is skewed to low complexity. Residues 302-323 (LVGIMVVSCICWSPLLVLVVLA) traverse the membrane as a helical segment. Residues 324–337 (IGGWNSNSLQRPLF) lie on the Extracellular side of the membrane. The helical transmembrane segment at 338–357 (LAVRLASWNQILDPWVYILL) threads the bilayer. Residues 358–405 (RQAMLRQLLRLLPLRVSAKGGPTELGLTKSAWEASSLRSSRHSGFSHL) are Cytoplasmic-facing.

Belongs to the G-protein coupled receptor 1 family. In terms of processing, phosphorylated. Abundant in kidney and in a lesser amount in lung.

The protein localises to the cell membrane. Functionally, receptor for prostaglandin E2 (PGE2). The activity of this receptor is mediated by G(q) proteins which activate a phosphatidylinositol-calcium second messenger system. May play a role as an important modulator of renal function. Implicated the smooth muscle contractile response to PGE2 in various tissues. In Mus musculus (Mouse), this protein is Prostaglandin E2 receptor EP1 subtype (Ptger1).